We begin with the raw amino-acid sequence, 220 residues long: IQ domain-containing protein F3 (220 aa).

Basic and acidic residues predominate over residues 1–22; that stretch reads MELDQDQKVETPEAAENGKDEM. The interval 1–81 is disordered; that stretch reads MELDQDQKVE…KQIQDEKTGI (81 aa). Residues 23–50 are compositionally biased toward acidic residues; it reads QLEEQTQDEDTTETETETETETEAEAEG. A coiled-coil region spans residues 69 to 93; that stretch reads QAEKQIQDEKTGIKEADRAIQEQTQ. One can recognise an IQ domain in the interval 146–175; it reads AELAGVKIQAWWRGTLVRRTLLLAILSAWT.

The chain is IQ domain-containing protein F3 (Iqcf3) from Rattus norvegicus (Rat).